The primary structure comprises 578 residues: Monooxygenase cfoE (578 aa).

A helical membrane pass occupies residues 549-569 (IVLSGVPLVVFGSLHLVLWIF).

It belongs to the FMO family. The cofactor is FAD.

It localises to the membrane. The protein operates within secondary metabolite biosynthesis; flavonoid biosynthesis. Its function is as follows. Monooxygenase; part of the gene cluster that mediates the biosynthesis of chlorflavonin, a fungal flavonoid with acetolactate synthase inhibitory activity. Within the pathway, cfoE is responsible for the chlorination of the flavonoid skeleton at position C3'. The pathway begins with the PKS-NRPS hybrid synthetase cfoA that uses benzoic acid or p-hydroxybenzoic acid as a starter unit with four rounds of chain elongation using malonyl-CoA to form the chalcone skeleton. Then, a new type of chalcone isomerase, cfoK, catalyzes the conversion of the chalcone into a flavanone by a histidine-mediated oxa-Michael addition mechanism. The desaturation of flavanone to flavone is catalyzed by a new type of flavone synthase, the flavin mononucleotide (FMN)-dependent oxidoreductase cfoJ. Monooxygenases cfoF, cfoG, and P450 cfoH are responsible for the hydroxylation of the flavonoid skeleton at sites C3, C8, and C2', respectively. Like cfoF, the dehydratase cfoI plays also a role in the hydroxylation of position C3. Methyltransferases cfoB, cfoC, and cfoD then catalyze the methylation of C7-OH, C8-OH, and C3-OH, respectively. Finally, the monooxygenase cfoE is responsible for the chlorination of flavonoid at position C3'. The protein is Monooxygenase cfoE of Aspergillus candidus.